The primary structure comprises 314 residues: MDYGMYFFEHVTPYETLVRRMERVIASGKTPFQDYFLFESKGFGKVLILDKDVQSTERDEYIYHETLVHPAMLTHPEPKRVLIVGGGEGATLREVLKHPTVEKAVMVDIDGELVEVAKRHMPEWHQGAFDDPRAVLVIDDARAYLERTEERYDVVIIDLTDPVGEDNPARLLYTVEFYRLVKAHLNPGGVMGMQAGMILLTHHRVHPVVHRTVREAFRYVRSYKNHIPGFFLNFGFLLASDAFDPAAFSEGVIEARIRERNLALRHLTAPYLEAMFVLPKDLLEALEKETMVSTDQNPFYVTPEGEARQAPYKG.

The region spanning 4 to 241 (GMYFFEHVTP…LNFGFLLASD (238 aa)) is the PABS domain. Residue glutamine 33 coordinates S-methyl-5'-thioadenosine. The spermidine site is built by histidine 64 and glutamate 88. Residues aspartate 108 and 140 to 141 (DA) each bind S-methyl-5'-thioadenosine. The Proton acceptor role is filled by aspartate 158. Proline 168 provides a ligand contact to S-methyl-5'-thioadenosine.

The protein belongs to the spermidine/spermine synthase family. As to quaternary structure, homodimer or homotetramer.

Its subcellular location is the cytoplasm. It catalyses the reaction S-adenosyl 3-(methylsulfanyl)propylamine + putrescine = S-methyl-5'-thioadenosine + spermidine + H(+). Its pathway is amine and polyamine biosynthesis; spermidine biosynthesis; spermidine from putrescine: step 1/1. In terms of biological role, catalyzes the irreversible transfer of a propylamine group from the amino donor S-adenosylmethioninamine (decarboxy-AdoMet) to putrescine (1,4-diaminobutane) to yield spermidine. In Thermus thermophilus (strain ATCC BAA-163 / DSM 7039 / HB27), this protein is Polyamine aminopropyltransferase.